The sequence spans 379 residues: Heme chaperone HemW (379 aa).

The region spanning 1–233 (MKSAYIHIPF…MSKMEAHGIH (233 aa)) is the Radical SAM core domain. S-adenosyl-L-methionine is bound at residue Tyr-5. The [4Fe-4S] cluster site is built by Cys-11, Cys-15, and Cys-18. Residues Gly-60, 61-62 (GT), Glu-94, Gln-121, Arg-133, and Asp-158 contribute to the S-adenosyl-L-methionine site.

The protein belongs to the anaerobic coproporphyrinogen-III oxidase family. HemW subfamily. [4Fe-4S] cluster serves as cofactor.

The protein localises to the cytoplasm. In terms of biological role, probably acts as a heme chaperone, transferring heme to an unknown acceptor. Binds one molecule of heme per monomer, possibly covalently. Binds 1 [4Fe-4S] cluster. The cluster is coordinated with 3 cysteines and an exchangeable S-adenosyl-L-methionine. This Bacillus subtilis (strain 168) protein is Heme chaperone HemW.